Here is a 327-residue protein sequence, read N- to C-terminus: Cobalamin biosynthesis protein CobD (327 aa).

The next 4 membrane-spanning stretches (helical) occupy residues 63–83 (VGIL…ARLF), 84–104 (DVLG…FLAQ), 158–178 (FSDG…PGLL), and 305–325 (VFYA…LPLL).

This sequence belongs to the CobD/CbiB family.

It localises to the cell membrane. It functions in the pathway cofactor biosynthesis; adenosylcobalamin biosynthesis. Its function is as follows. Converts cobyric acid to cobinamide by the addition of aminopropanol on the F carboxylic group. This is Cobalamin biosynthesis protein CobD from Rhizobium meliloti (strain 1021) (Ensifer meliloti).